Consider the following 141-residue polypeptide: MAIQRTFSIIKPNAVKKNVIGAIYNRFESAGFSIVAAKMLHLTREQAEGFYEEHKGRPFFDGLVEFMTSGPIMVQVLEGENAIQRHRDLMGATNPDNALAGTLRADYADSFTENAVHGSDSEASAAREIAYFFTENEICPR.

6 residues coordinate ATP: K11, F59, R87, T93, R104, and N114. H117 serves as the catalytic Pros-phosphohistidine intermediate.

The protein belongs to the NDK family. As to quaternary structure, homotetramer. Requires Mg(2+) as cofactor.

The protein resides in the cytoplasm. It carries out the reaction a 2'-deoxyribonucleoside 5'-diphosphate + ATP = a 2'-deoxyribonucleoside 5'-triphosphate + ADP. The enzyme catalyses a ribonucleoside 5'-diphosphate + ATP = a ribonucleoside 5'-triphosphate + ADP. Major role in the synthesis of nucleoside triphosphates other than ATP. The ATP gamma phosphate is transferred to the NDP beta phosphate via a ping-pong mechanism, using a phosphorylated active-site intermediate. The chain is Nucleoside diphosphate kinase from Proteus mirabilis (strain HI4320).